Here is a 146-residue protein sequence, read N- to C-terminus: ATP synthase F(0) complex subunit C2, mitochondrial (146 aa).

Residues 1 to 71 (MYACSKFVST…RSFQTSAISR (71 aa)) constitute a mitochondrion transit peptide. Residues 87 to 107 (VGVAGSGAGIGTVFGSLIIGY) form a helical membrane-spanning segment. N6,N6,N6-trimethyllysine is present on K114. Residues 122–142 (ILGFALSEAMGLFCLMVAFLI) form a helical membrane-spanning segment.

The protein belongs to the ATPase C chain family. As to quaternary structure, F-type ATPases have 2 components, CF(1) - the catalytic core - and CF(0) - the membrane proton channel. CF(1) has five subunits: alpha(3), beta(3), gamma(1), delta(1), epsilon(1). CF(0) has three main subunits: a, b and c. Interacts with DNAJC30; interaction is direct. Trimethylated by ATPSCKMT at Lys-114. Methylation is required for proper incorporation of the C subunit into the ATP synthase complex and mitochondrial respiration.

It localises to the mitochondrion membrane. Mitochondrial membrane ATP synthase (F(1)F(0) ATP synthase or Complex V) produces ATP from ADP in the presence of a proton gradient across the membrane which is generated by electron transport complexes of the respiratory chain. F-type ATPases consist of two structural domains, F(1) - containing the extramembraneous catalytic core and F(0) - containing the membrane proton channel, linked together by a central stalk and a peripheral stalk. During catalysis, ATP synthesis in the catalytic domain of F(1) is coupled via a rotary mechanism of the central stalk subunits to proton translocation. Part of the complex F(0) domain. A homomeric c-ring of probably 10 subunits is part of the complex rotary element. The chain is ATP synthase F(0) complex subunit C2, mitochondrial from Mus musculus (Mouse).